The following is a 293-amino-acid chain: Ribosomal protein L11 methyltransferase (293 aa).

S-adenosyl-L-methionine-binding residues include threonine 145, glycine 166, aspartate 188, and asparagine 230.

The protein belongs to the methyltransferase superfamily. PrmA family.

It localises to the cytoplasm. It catalyses the reaction L-lysyl-[protein] + 3 S-adenosyl-L-methionine = N(6),N(6),N(6)-trimethyl-L-lysyl-[protein] + 3 S-adenosyl-L-homocysteine + 3 H(+). Methylates ribosomal protein L11. The protein is Ribosomal protein L11 methyltransferase of Enterobacter sp. (strain 638).